We begin with the raw amino-acid sequence, 311 residues long: Methionyl-tRNA formyltransferase (311 aa).

110–113 lines the (6S)-5,6,7,8-tetrahydrofolate pocket; that stretch reads SLLP.

This sequence belongs to the Fmt family.

It carries out the reaction L-methionyl-tRNA(fMet) + (6R)-10-formyltetrahydrofolate = N-formyl-L-methionyl-tRNA(fMet) + (6S)-5,6,7,8-tetrahydrofolate + H(+). Functionally, attaches a formyl group to the free amino group of methionyl-tRNA(fMet). The formyl group appears to play a dual role in the initiator identity of N-formylmethionyl-tRNA by promoting its recognition by IF2 and preventing the misappropriation of this tRNA by the elongation apparatus. This Streptococcus pyogenes serotype M3 (strain ATCC BAA-595 / MGAS315) protein is Methionyl-tRNA formyltransferase.